We begin with the raw amino-acid sequence, 1213 residues long: MAAPANASSKKDHVIPVLLNECSIDSPSFRASMYYLGNQIKAFNEWSHDFLCCCNKFIESIMAIEPIVASMSLNAMPSNVASGFFDPDYATTALLHGQDLFRSSYMVQLQQAKNLRKFIVAPLDLFRDSKVKPLLQLNDRFKAEQAKYDAEVLRYSSLGHSKDLSQMRDEAKSLYEARKSYFTVALQYVVRVTSFRSSIDFIVIESICKFSIETFRLTDRLHESNRHINDQLIRLLSYETKLKESYPSLKRIVSNVFDRIEKEILKRVQPPTNLDAYRFDPQQICQTNATKRQGWLLRNISSSKADNKAIWRKYWFFVDNGYVGYLINDANGGVFESEKIGVLLCKFSVLPSNHRKFCFQIKTKSVSYILQAETHMEMLEWGSVINNAREHCINSGISANRILSPTLPSFSAKATSIINPQVNGRSNSTGKIGKNYRPRRTYSGRLLCGPNNYEVSTIMRSPTISTVPPPKYLSNSINGAKFLNPLAPWTLVNAPLITNLTHETITSLLDQEAFFHGNSPCALLANFWGSVNYGHVLERQNVYIEDLSNPSYKRLAREIHIEKLPSELKLRNAEFRGIFGESEASTVLFVCRVCSKREDQIRMPGRMYCTMKGIYIYYNINGLVLIEHFPISSILNVKQFASTKCDYFYMNIQNIGTVRFRLYLDSSKALTDRLNVLLCNYIADKPNSSIQLLSCIKRLNDDVKRFERGGDDNALKSYGVQPSQEDLLIRRGRSSRALTNLINKNESNDSFMEDLRDFKIAMLPKETVQVVRSHHLDDIVFDRVYNVSTKALFHIVFGDRSTVLSGAYNLHGVDDVEFLPWGKDPKTNLSRRYINYKVYNYDQEGQCQSYHYEDCQIMDVRNDYHLYIMTWLHHSWTLPYRDYFKIVTKTSISHLRREKSRLLISVGLEWIVKPFAISKVIEAECRKLAIKYIKTEVNFLEKATRRARNQPLIAIINQYGRVGDYNESMVYRRKIPFNCELKNLSIIDIIRNNWWLFLQGLAIDLLKLPWAVFHIFLRYLFSHSFLVIIFACSVILNLSLMFCFGAKYWDERQNNKFVGQVFDEFKNIETSARYVYMKDVDDLLVGLPTYLHPNVTYPSECLQSFALKSSPQKSHWLRKRNYIAEKRKKILENLASLNYYEYIIHEDAVYQYIQQELLGCDKAREFDLYPPSMQRYCDSCTQDWRNRTLFFGKDTLATRLLTLETVENADYAA.

Residues 289–390 enclose the PH domain; sequence ATKRQGWLLR…WGSVINNARE (102 aa). Residues 776 to 945 enclose the VASt domain; the sequence is LDDIVFDRVY…EVNFLEKATR (170 aa). The next 2 helical transmembrane spans lie at 996–1016 and 1025–1045; these read LFLQ…FHIF and FLVI…FCFG.

It localises to the cytoplasm. The protein resides in the nucleus membrane. It is found in the cytoskeleton. Its subcellular location is the microtubule organizing center. The protein localises to the spindle pole body. This is an uncharacterized protein from Schizosaccharomyces pombe (strain 972 / ATCC 24843) (Fission yeast).